The chain runs to 346 residues: D-fructose 1,6-bisphosphatase class 2/sedoheptulose 1,7-bisphosphatase (346 aa).

Positions 33, 57, 97, and 100 each coordinate Mn(2+). Substrate contacts are provided by residues Glu-100 to Thr-102, Tyr-131, Arg-176 to Arg-178, and Asp-198 to Asp-200. Glu-225 provides a ligand contact to Mn(2+).

This sequence belongs to the FBPase class 2 family. In terms of assembly, homotetramer. Requires Mn(2+) as cofactor.

The catalysed reaction is beta-D-fructose 1,6-bisphosphate + H2O = beta-D-fructose 6-phosphate + phosphate. It catalyses the reaction D-sedoheptulose 1,7-bisphosphate + H2O = D-sedoheptulose 7-phosphate + phosphate. The protein operates within carbohydrate biosynthesis; Calvin cycle. Its function is as follows. Catalyzes the hydrolysis of fructose 1,6-bisphosphate (Fru 1,6-P2) and sedoheptulose 1,7-bisphosphate (Sed 1,7-P2) to fructose 6-phosphate and sedoheptulose 7-phosphate, respectively. This chain is D-fructose 1,6-bisphosphatase class 2/sedoheptulose 1,7-bisphosphatase, found in Gloeobacter violaceus (strain ATCC 29082 / PCC 7421).